We begin with the raw amino-acid sequence, 420 residues long: Tryptophan synthase beta chain (420 aa).

Position 100 is an N6-(pyridoxal phosphate)lysine (K100).

This sequence belongs to the TrpB family. As to quaternary structure, tetramer of two alpha and two beta chains. It depends on pyridoxal 5'-phosphate as a cofactor.

It catalyses the reaction (1S,2R)-1-C-(indol-3-yl)glycerol 3-phosphate + L-serine = D-glyceraldehyde 3-phosphate + L-tryptophan + H2O. It functions in the pathway amino-acid biosynthesis; L-tryptophan biosynthesis; L-tryptophan from chorismate: step 5/5. In terms of biological role, the beta subunit is responsible for the synthesis of L-tryptophan from indole and L-serine. The sequence is that of Tryptophan synthase beta chain from Pyrobaculum islandicum (strain DSM 4184 / JCM 9189 / GEO3).